A 411-amino-acid polypeptide reads, in one-letter code: Efflux pump periplasmic linker BepF (411 aa).

Positions 118–196 form a coiled coil; that stretch reads FVLQKDALQA…SLEQAQINLG (79 aa).

Belongs to the membrane fusion protein (MFP) (TC 8.A.1) family. Probably part of a tripartite efflux pump, which is composed of an outer membrane efflux protein, an inner membrane protein and a protein that expands the periplasmic space. Could form a tripartite pump with BepC and BepG.

The protein resides in the periplasm. Its function is as follows. May contribute to resistance to some drugs, such as deoxycholate, sodium dodecyl sulfate and nalidixic acid, in the absence of BepD and BepE. This is Efflux pump periplasmic linker BepF (bepF) from Brucella suis biovar 1 (strain 1330).